The primary structure comprises 262 residues: Ribosomal RNA small subunit methyltransferase A (262 aa).

S-adenosyl-L-methionine-binding residues include N20, L22, G47, E68, D90, and N110.

The protein belongs to the class I-like SAM-binding methyltransferase superfamily. rRNA adenine N(6)-methyltransferase family. RsmA subfamily.

It is found in the cytoplasm. It catalyses the reaction adenosine(1518)/adenosine(1519) in 16S rRNA + 4 S-adenosyl-L-methionine = N(6)-dimethyladenosine(1518)/N(6)-dimethyladenosine(1519) in 16S rRNA + 4 S-adenosyl-L-homocysteine + 4 H(+). In terms of biological role, specifically dimethylates two adjacent adenosines (A1518 and A1519) in the loop of a conserved hairpin near the 3'-end of 16S rRNA in the 30S particle. May play a critical role in biogenesis of 30S subunits. In Chlorobium phaeobacteroides (strain BS1), this protein is Ribosomal RNA small subunit methyltransferase A.